The chain runs to 195 residues: Imidazoleglycerol-phosphate dehydratase (195 aa).

The protein belongs to the imidazoleglycerol-phosphate dehydratase family.

Its subcellular location is the cytoplasm. It carries out the reaction D-erythro-1-(imidazol-4-yl)glycerol 3-phosphate = 3-(imidazol-4-yl)-2-oxopropyl phosphate + H2O. The protein operates within amino-acid biosynthesis; L-histidine biosynthesis; L-histidine from 5-phospho-alpha-D-ribose 1-diphosphate: step 6/9. The polypeptide is Imidazoleglycerol-phosphate dehydratase (Burkholderia lata (strain ATCC 17760 / DSM 23089 / LMG 22485 / NCIMB 9086 / R18194 / 383)).